Reading from the N-terminus, the 706-residue chain is Glycogen [starch] synthase (706 aa).

R26 contacts UDP. UDP-alpha-D-glucose is bound by residues H191 and R197. Alpha-D-glucose 6-phosphate-binding residues include H277, E278, Q280, H283, and K287. Residue R317 coordinates UDP. R317 contributes to the UDP-alpha-D-glucose binding site. Alpha-D-glucose 6-phosphate is bound at residue H491. Residues E500, W502, and G503 each contribute to the UDP-alpha-D-glucose site. T505 is a binding site for UDP. Positions 572 and 576 each coordinate alpha-D-glucose 6-phosphate. Positions 670-706 are disordered; the sequence is PEEEDPEEYPFPLTLKQRTGPGSPLDSIQGLQLNGTR.

It belongs to the glycosyltransferase 3 family. As to quaternary structure, interacts with glucogenin gnn; the interaction is direct.

The catalysed reaction is [(1-&gt;4)-alpha-D-glucosyl](n) + UDP-alpha-D-glucose = [(1-&gt;4)-alpha-D-glucosyl](n+1) + UDP + H(+). The protein operates within glycan biosynthesis; glycogen biosynthesis. With respect to regulation, allosteric activation by glucose-6-phosphate, and phosphorylation by a cAMP-dependent kinase. Functionally, glycogen synthase participates in the glycogen biosynthetic process along with glycogenin and glycogen branching enzyme. Extends the primer composed of a few glucose units formed by glycogenin by adding new glucose units to it. In this context, glycogen synthase transfers the glycosyl residue from UDP-Glc to the non-reducing end of alpha-1,4-glucan. The polypeptide is Glycogen [starch] synthase (gsy-1) (Neurospora crassa (strain ATCC 24698 / 74-OR23-1A / CBS 708.71 / DSM 1257 / FGSC 987)).